We begin with the raw amino-acid sequence, 804 residues long: Leucine--tRNA ligase (804 aa).

Positions proline 39–histidine 50 match the 'HIGH' region motif. The short motif at lysine 573 to serine 577 is the 'KMSKS' region element. Position 576 (lysine 576) interacts with ATP.

Belongs to the class-I aminoacyl-tRNA synthetase family.

It is found in the cytoplasm. The catalysed reaction is tRNA(Leu) + L-leucine + ATP = L-leucyl-tRNA(Leu) + AMP + diphosphate. The sequence is that of Leucine--tRNA ligase from Lactobacillus delbrueckii subsp. bulgaricus (strain ATCC 11842 / DSM 20081 / BCRC 10696 / JCM 1002 / NBRC 13953 / NCIMB 11778 / NCTC 12712 / WDCM 00102 / Lb 14).